We begin with the raw amino-acid sequence, 448 residues long: Nucleoprotein (448 aa).

The disordered stretch occupies residues 1-55; sequence MSFTPGKQSSSRASSGNRSGNGILKWADQSDQVRNVQTRGRRAQPKQTATSQQPS. A compositionally biased stretch (low complexity) spans 9–22; sequence SSSRASSGNRSGNG. Composition is skewed to polar residues over residues 29–38 and 45–55; these read QSDQVRNVQT and PKQTATSQQPS. The RNA-binding stretch occupies residues 52–194; that stretch reads QQPSGGNVVP…GYYIEGSGRS (143 aa). One can recognise a CoV N NTD domain in the interval 61–190; sequence PYYSWFSGIT…VLPQGYYIEG (130 aa). RNA-binding residues include Arg-106, Arg-122, and Arg-164. Disordered regions lie at residues 158-231, 266-293, and 385-448; these read PADI…VTPD, ILNK…GPNQ, and GMMN…TSEI. Position 167 is a phosphoserine; by host (Ser-167). Phosphothreonine; by host is present on Thr-174. Residue Ser-191 is modified to Phosphoserine; by host. Low complexity predominate over residues 193–223; it reads RSAPNSRSTSRTSSRASSAGSRSRANSGNRT. A CoV N CTD domain is found at 259–384; it reads AKEVRQKILN…ENLNAYQQQD (126 aa). A compositionally biased stretch (basic residues) spans 266–276; that stretch reads ILNKPRQKRSP. The interval 266–384 is dimerization; sequence ILNKPRQKRS…ENLNAYQQQD (119 aa). Residues Ser-390 and Ser-423 each carry the phosphoserine; by host modification. A compositionally biased stretch (basic and acidic residues) spans 422-439; sequence KSRELTAEDISLLKKMDE. Position 427 is a phosphothreonine; by host (Thr-427).

The protein belongs to the betacoronavirus nucleocapsid protein family. As to quaternary structure, homooligomer. Both monomeric and oligomeric forms interact with RNA. Interacts with protein M. Interacts with NSP3; this interaction serves to tether the genome to the newly translated replicase-transcriptase complex at a very early stage of infection. Post-translationally, ADP-ribosylated. The ADP-ribosylation is retained in the virion during infection. Phosphorylated on serine and threonine residues. In terms of processing, proteolytically cleaved by host CASP6. The cleavage leads to two fragments and facilitates viral replication by inhibiting host IFN signaling. The two fragments may interact with IRF3 inhibiting its nuclear translocation after activation and reduce the expression of IFNB and IFN-stimulated genes.

It localises to the virion. The protein resides in the host endoplasmic reticulum-Golgi intermediate compartment. The protein localises to the host Golgi apparatus. In terms of biological role, packages the positive strand viral genome RNA into a helical ribonucleocapsid (RNP) and plays a fundamental role during virion assembly through its interactions with the viral genome and membrane protein M. Plays an important role in enhancing the efficiency of subgenomic viral RNA transcription as well as viral replication. Attenuates the stress granules formation by reducing host G3BP1 access to host mRNAs under stress conditions. This chain is Nucleoprotein, found in Homo sapiens (Human).